The sequence spans 717 residues: Fatty acid oxidation complex subunit alpha (717 aa).

An enoyl-CoA hydratase/isomerase region spans residues Met-1–Ala-190. Asp-298 is a substrate binding site. Residues His-313–Gly-717 form a 3-hydroxyacyl-CoA dehydrogenase region. Residues Met-326, Asp-345, Val-402 to Glu-404, Lys-409, and Ser-431 each bind NAD(+). His-452 functions as the For 3-hydroxyacyl-CoA dehydrogenase activity in the catalytic mechanism. Position 455 (Asn-455) interacts with NAD(+). Asn-502 contacts substrate.

It in the N-terminal section; belongs to the enoyl-CoA hydratase/isomerase family. The protein in the C-terminal section; belongs to the 3-hydroxyacyl-CoA dehydrogenase family. In terms of assembly, heterotetramer of two alpha chains (FadB) and two beta chains (FadA).

The catalysed reaction is a (3S)-3-hydroxyacyl-CoA + NAD(+) = a 3-oxoacyl-CoA + NADH + H(+). It catalyses the reaction a (3S)-3-hydroxyacyl-CoA = a (2E)-enoyl-CoA + H2O. The enzyme catalyses a 4-saturated-(3S)-3-hydroxyacyl-CoA = a (3E)-enoyl-CoA + H2O. It carries out the reaction (3S)-3-hydroxybutanoyl-CoA = (3R)-3-hydroxybutanoyl-CoA. The catalysed reaction is a (3Z)-enoyl-CoA = a 4-saturated (2E)-enoyl-CoA. It catalyses the reaction a (3E)-enoyl-CoA = a 4-saturated (2E)-enoyl-CoA. It participates in lipid metabolism; fatty acid beta-oxidation. Its function is as follows. Involved in the aerobic and anaerobic degradation of long-chain fatty acids via beta-oxidation cycle. Catalyzes the formation of 3-oxoacyl-CoA from enoyl-CoA via L-3-hydroxyacyl-CoA. It can also use D-3-hydroxyacyl-CoA and cis-3-enoyl-CoA as substrate. The sequence is that of Fatty acid oxidation complex subunit alpha from Acinetobacter baumannii (strain SDF).